A 1268-amino-acid polypeptide reads, in one-letter code: MGAGSVWASGLLLLWLLLLVAGDQDTQDTTATEKGLRMLKSGSGPVRAALAELVALPCFFTLQPRLSSLRDIPRIKWTKVQTASGQRQDLPILVAKDNVVRVAKGWQGRVSLPAYPRHRANATLLLGPLRASDSGLYRCQVVKGIEDEQDLVTLEVTGVVFHYRAARDRYALTFAEAQEACRLSSATIAAPRHLQAAFEDGFDNCDAGWLSDRTVRYPITQSRPGCYGDRSSLPGVRSYGRRDPQELYDVYCFARELGGEVFYVGPARRLTLAGARAQCQRQGAALASVGQLHLAWHEGLDQCDPGWLADGSVRYPIQTPRRRCGGPAPGVRTVYRFANRTGFPAPGARFDAYCFRAHHHTAQHGDSEIPSSGDEGEIVSAEGPPGRELKPSLGEQEVIAPDFQEPLMSSGEGEPPDLTWTQAPEETLGSTPGGPTLASWPSSEKWLFTGAPSSMGVSSPSDMGVDMEATTPLGTQVAPTPTMRRGRFKGLNGRHFQQQGPEDQLPEVAEPSAQPPTLGATANHMRPSAATEASESDQSHSPWAILTNEVDEPGAGSLGSRSLPESLMWSPSLISPSVPSTESTPSPKPGAAEAPSVKSAIPHLPRLPSEPPAPSPGPSEALSAVSLQASSADGSPDFPIVAMLRAPKLWLLPRSTLVPNMTPVPLSPASPLPSWVPEEQAVRPVSLGAEDLETPFQTTIAAPVEASHRSPDADSIEIEGTSSMRATKHPISGPWASLDSSNVTMNPVPSDAGILGTESGVLDLPGSPTSGGQATVEKVLATWLPLPGQGLDPGSQSTPMEAHGVAVSMEPTVALEGGATEGPMEATREVVPSTADATWESESRSAISSTHIAVTMARAQGMPTLTSTSSEGHPEPKGQMVAQESLEPLNTLPSHPWSSLVVPMDEVASVSSGEPTGLWDIPSTLIPVSLGLDESVLNVVAESPSVEGFWEEVASGQEDPTDPCENNPCLHGGTCHTNGTVYGCSCDQGYAGENCEIDIDDCLCSPCENGGTCIDEVNGFICLCLPSYGGSLCEKDTEGCDRGWHKFQGHCYRYFAHRRAWEDAERDCRRRAGHLTSVHSPEEHKFINSFGHENSWIGLNDRTVERDFQWTDNTGLQYENWREKQPDNFFAGGEDCVVMVAHESGRWNDVPCNYNLPYVCKKGTVLCGPPPAVENASLVGVRKIKYNVHATVRYQCDEGFSQHRVATIRCRNNGKWDRPQIMCIKPRRSHRMRRHHHHPHRHHKPRKEHRKHKRHPAEDWEKDEGDFC.

Positions 1–22 are cleaved as a signal peptide; sequence MGAGSVWASGLLLLWLLLLVAG. In terms of domain architecture, Ig-like V-type spans 37–157; it reads RMLKSGSGPV…EQDLVTLEVT (121 aa). Intrachain disulfides connect Cys58/Cys139, Cys181/Cys252, Cys205/Cys226, Cys279/Cys354, and Cys303/Cys324. N-linked (GlcNAc...) asparagine glycosylation occurs at Asn121. 2 Link domains span residues 159-254 and 258-356; these read VVFH…YCFA and GGEV…YCFR. Asn339 carries an N-linked (GlcNAc...) asparagine glycan. 4 disordered regions span residues 363-391, 406-442, 472-540, and 574-630; these read QHGD…ELKP, PLMS…SWPS, PLGT…DQSH, and ISPS…LQAS. Residues Ser380 and Ser410 are each glycosylated (O-linked (Xyl...) (chondroitin sulfate) serine). The span at 419–430 shows a compositional bias: polar residues; that stretch reads TWTQAPEETLGS. Positions 575-585 are enriched in low complexity; it reads SPSVPSTESTP. The segment covering 608-617 has biased composition (pro residues); that stretch reads PSEPPAPSPG. Residues 618-630 show a composition bias toward low complexity; sequence PSEALSAVSLQAS. Residue Asn742 is glycosylated (N-linked (GlcNAc...) asparagine). The region spanning 960–996 is the EGF-like 1 domain; it reads PTDPCENNPCLHGGTCHTNGTVYGCSCDQGYAGENCE. Disulfide bonds link Cys964–Cys975, Cys969–Cys984, Cys986–Cys995, Cys1002–Cys1013, Cys1007–Cys1022, Cys1024–Cys1033, Cys1040–Cys1051, Cys1068–Cys1160, Cys1136–Cys1152, Cys1167–Cys1210, and Cys1196–Cys1223. The N-linked (GlcNAc...) asparagine glycan is linked to Asn978. Residues 998-1034 form the EGF-like 2; calcium-binding domain; the sequence is DIDDCLCSPCENGGTCIDEVNGFICLCLPSYGGSLCE. The region spanning 1036–1165 is the C-type lectin domain; it reads DTEGCDRGWH…LPYVCKKGTV (130 aa). Residues 1165 to 1225 form the Sushi domain; that stretch reads VLCGPPPAVE…WDRPQIMCIK (61 aa). Asn1175 is a glycosylation site (N-linked (GlcNAc...) asparagine). Basic residues predominate over residues 1228-1255; that stretch reads RSHRMRRHHHHPHRHHKPRKEHRKHKRH. The interval 1228–1268 is disordered; the sequence is RSHRMRRHHHHPHRHHKPRKEHRKHKRHPAEDWEKDEGDFC.

It belongs to the aggrecan/versican proteoglycan family. In terms of processing, O-glycosylated; contains chondroitin sulfate. Brain.

The protein resides in the secreted. Its function is as follows. May modulate neuronal adhesion and neurite growth during development by binding to neural cell adhesion molecules (NG-CAM and N-CAM). Chondroitin sulfate proteoglycan; binds to hyaluronic acid. This chain is Neurocan core protein (Ncan), found in Mus musculus (Mouse).